The primary structure comprises 31 residues: Hemocyanin subunit 2 (31 aa).

The protein belongs to the tyrosinase family. Hemocyanin subfamily. Hemolymph.

The protein resides in the secreted. It is found in the extracellular space. In terms of biological role, hemocyanins are copper-containing oxygen carriers occurring freely dissolved in the hemolymph of many mollusks and arthropods. This chain is Hemocyanin subunit 2, found in Maja squinado (Mediterranean spider crab).